A 56-amino-acid polypeptide reads, in one-letter code: Large ribosomal subunit protein bL33 (56 aa).

Belongs to the bacterial ribosomal protein bL33 family.

This is Large ribosomal subunit protein bL33 from Halorhodospira halophila (strain DSM 244 / SL1) (Ectothiorhodospira halophila (strain DSM 244 / SL1)).